We begin with the raw amino-acid sequence, 20 residues long: Octopamine receptor (20 aa).

The protein belongs to the G-protein coupled receptor 1 family.

It is found in the cell membrane. In terms of biological role, putative receptor for octopamine. Octopamine (OA) is a neurotransmitter, neurohormone, and neuromodulator in invertebrates. The activity of this receptor is mediated by G proteins which activate adenylyl cyclase. This chain is Octopamine receptor, found in Photinus pyralis (Common eastern firefly).